Reading from the N-terminus, the 289-residue chain is uncharacterized protein (289 aa).

The signal sequence occupies residues 1-23 (MIKNYKLLLFTTFTLFFITFVSG). N-linked (GlcNAc...) asparagine glycans are attached at residues asparagine 74, asparagine 101, asparagine 132, and asparagine 285.

Its subcellular location is the secreted. This is an uncharacterized protein from Dictyostelium discoideum (Social amoeba).